The chain runs to 284 residues: Small ribosomal subunit protein uS5y/uS5u/uS5v (284 aa).

Over residues 1 to 19 (MAERGGESGAERGGDRGDF) the composition is skewed to basic and acidic residues. The disordered stretch occupies residues 1 to 51 (MAERGGESGAERGGDRGDFGRGFGGGRGGGRGRDRGPRGRGRRGGRASEET). The segment covering 20-29 (GRGFGGGRGG) has biased composition (gly residues). Residues 95–158 (LKDEVMKIMP…ILAKLSVVPV (64 aa)) enclose the S5 DRBM domain.

It belongs to the universal ribosomal protein uS5 family.

In Arabidopsis thaliana (Mouse-ear cress), this protein is Small ribosomal subunit protein uS5y/uS5u/uS5v (RPS2B).